Consider the following 441-residue polypeptide: Ribosomal protein uS12 methylthiotransferase RimO (441 aa).

An MTTase N-terminal domain is found at 8–118 (PKIGFVSLGC…VLQHVHHYVP (111 aa)). Residues Cys17, Cys53, Cys82, Cys150, Cys154, and Cys157 each coordinate [4Fe-4S] cluster. Positions 136-373 (LTPRHYAYLK…MQLQQQISAE (238 aa)) constitute a Radical SAM core domain. The TRAM domain occupies 376 to 441 (QEKVGREILV…DEYDLWGSRV (66 aa)).

It belongs to the methylthiotransferase family. RimO subfamily. [4Fe-4S] cluster serves as cofactor.

The protein resides in the cytoplasm. The enzyme catalyses L-aspartate(89)-[ribosomal protein uS12]-hydrogen + (sulfur carrier)-SH + AH2 + 2 S-adenosyl-L-methionine = 3-methylsulfanyl-L-aspartate(89)-[ribosomal protein uS12]-hydrogen + (sulfur carrier)-H + 5'-deoxyadenosine + L-methionine + A + S-adenosyl-L-homocysteine + 2 H(+). Its function is as follows. Catalyzes the methylthiolation of an aspartic acid residue of ribosomal protein uS12. The chain is Ribosomal protein uS12 methylthiotransferase RimO from Salmonella paratyphi A (strain ATCC 9150 / SARB42).